A 545-amino-acid chain; its full sequence is Chromosomal replication initiator protein DnaA (545 aa).

The segment at 1-72 is domain I, interacts with DnaA modulators; it reads MNDFWQHCSA…DMARDFWQAP (72 aa). The domain II stretch occupies residues 72–208; it reads PVDVQFVLDP…GETDSMYERS (137 aa). Low complexity predominate over residues 90–105; that stretch reads AAAPAPASARPASAPG. Disordered stretches follow at residues 90–112 and 181–204; these read AAAPAPASARPASAPGSMGGSAG and AAARRTWRPGQSASSNGNGETDSM. Residues 189–201 are compositionally biased toward polar residues; it reads PGQSASSNGNGET. Residues 209–425 form a domain III, AAA+ region region; sequence KLNPVLTFDN…GALRKILAYS (217 aa). Residues glycine 253, glycine 255, lysine 256, and threonine 257 each coordinate ATP. The interval 426–545 is domain IV, binds dsDNA; that stretch reads KFHGREITIE…LHVLEQTLKG (120 aa).

The protein belongs to the DnaA family. In terms of assembly, oligomerizes as a right-handed, spiral filament on DNA at oriC.

The protein resides in the cytoplasm. In terms of biological role, plays an essential role in the initiation and regulation of chromosomal replication. ATP-DnaA binds to the origin of replication (oriC) to initiate formation of the DNA replication initiation complex once per cell cycle. Binds the DnaA box (a 9 base pair repeat at the origin) and separates the double-stranded (ds)DNA. Forms a right-handed helical filament on oriC DNA; dsDNA binds to the exterior of the filament while single-stranded (ss)DNA is stabiized in the filament's interior. The ATP-DnaA-oriC complex binds and stabilizes one strand of the AT-rich DNA unwinding element (DUE), permitting loading of DNA polymerase. After initiation quickly degrades to an ADP-DnaA complex that is not apt for DNA replication. Binds acidic phospholipids. In Paraburkholderia phytofirmans (strain DSM 17436 / LMG 22146 / PsJN) (Burkholderia phytofirmans), this protein is Chromosomal replication initiator protein DnaA.